The chain runs to 383 residues: S-adenosylmethionine synthase 1 (383 aa).

Position 15 (histidine 15) interacts with ATP. Aspartate 17 lines the Mg(2+) pocket. Glutamate 43 contacts K(+). L-methionine is bound by residues glutamate 56 and glutamine 99. The tract at residues 99 to 109 is flexible loop; it reads QSPDINLGVSR. ATP is bound by residues 162–164, 228–229, aspartate 237, 243–244, alanine 260, and lysine 264; these read DGK, RF, and RK. Aspartate 237 is an L-methionine binding site. Lysine 268 lines the L-methionine pocket.

This sequence belongs to the AdoMet synthase family. In terms of assembly, homotetramer; dimer of dimers. Requires Mg(2+) as cofactor. K(+) serves as cofactor.

The protein resides in the cytoplasm. It carries out the reaction L-methionine + ATP + H2O = S-adenosyl-L-methionine + phosphate + diphosphate. It functions in the pathway amino-acid biosynthesis; S-adenosyl-L-methionine biosynthesis; S-adenosyl-L-methionine from L-methionine: step 1/1. Functionally, catalyzes the formation of S-adenosylmethionine (AdoMet) from methionine and ATP. The overall synthetic reaction is composed of two sequential steps, AdoMet formation and the subsequent tripolyphosphate hydrolysis which occurs prior to release of AdoMet from the enzyme. The protein is S-adenosylmethionine synthase 1 of Rhodopseudomonas palustris (strain BisB18).